Consider the following 750-residue polypeptide: Photosystem I P700 chlorophyll a apoprotein A1 (750 aa).

8 consecutive transmembrane segments (helical) span residues 70-93 (VFSA…FHGA), 156-179 (LYCT…FHYH), 195-219 (LNHH…HVSL), 291-309 (IAHH…GHMY), 346-369 (WHAQ…HHMY), 385-411 (LSLF…IFMV), 433-455 (AIIS…LYIH), and 531-549 (FLVH…LILL). Residues C573 and C582 each coordinate [4Fe-4S] cluster. Transmembrane regions (helical) follow at residues 589–610 (HVFL…HFSW) and 664–686 (LSAY…MFLF). H675 contacts chlorophyll a'. M683 and Y691 together coordinate chlorophyll a. W692 is a binding site for phylloquinone. Residues 724-744 (AVGVTHYLLGGIATTWAFFLA) form a helical membrane-spanning segment.

The protein belongs to the PsaA/PsaB family. In terms of assembly, the PsaA/B heterodimer binds the P700 chlorophyll special pair and subsequent electron acceptors. PSI consists of a core antenna complex that captures photons, and an electron transfer chain that converts photonic excitation into a charge separation. The eukaryotic PSI reaction center is composed of at least 11 subunits. P700 is a chlorophyll a/chlorophyll a' dimer, A0 is one or more chlorophyll a, A1 is one or both phylloquinones and FX is a shared 4Fe-4S iron-sulfur center. serves as cofactor.

The protein resides in the plastid. Its subcellular location is the chloroplast thylakoid membrane. It carries out the reaction reduced [plastocyanin] + hnu + oxidized [2Fe-2S]-[ferredoxin] = oxidized [plastocyanin] + reduced [2Fe-2S]-[ferredoxin]. Its function is as follows. PsaA and PsaB bind P700, the primary electron donor of photosystem I (PSI), as well as the electron acceptors A0, A1 and FX. PSI is a plastocyanin-ferredoxin oxidoreductase, converting photonic excitation into a charge separation, which transfers an electron from the donor P700 chlorophyll pair to the spectroscopically characterized acceptors A0, A1, FX, FA and FB in turn. Oxidized P700 is reduced on the lumenal side of the thylakoid membrane by plastocyanin. The chain is Photosystem I P700 chlorophyll a apoprotein A1 from Pelargonium hortorum (Common geranium).